A 669-amino-acid chain; its full sequence is Acetyl-coenzyme A synthetase (669 aa).

Residues 211–214 (RGGK) and threonine 329 each bind CoA. ATP is bound by residues 404-406 (GEP), 428-433 (DTYWQT), aspartate 519, and arginine 534. A CoA-binding site is contributed by serine 542. Residue arginine 545 coordinates ATP. Arginine 602 is a binding site for CoA.

This sequence belongs to the ATP-dependent AMP-binding enzyme family.

The catalysed reaction is acetate + ATP + CoA = acetyl-CoA + AMP + diphosphate. It functions in the pathway ketone degradation; acetoin degradation. Its pathway is antibiotic biosynthesis; penicillin biosynthesis. The sequence is that of Acetyl-coenzyme A synthetase (facA) from Penicillium chrysogenum (Penicillium notatum).